Reading from the N-terminus, the 234-residue chain is Leucyl/phenylalanyl-tRNA--protein transferase (234 aa).

Belongs to the L/F-transferase family.

The protein resides in the cytoplasm. It carries out the reaction N-terminal L-lysyl-[protein] + L-leucyl-tRNA(Leu) = N-terminal L-leucyl-L-lysyl-[protein] + tRNA(Leu) + H(+). The enzyme catalyses N-terminal L-arginyl-[protein] + L-leucyl-tRNA(Leu) = N-terminal L-leucyl-L-arginyl-[protein] + tRNA(Leu) + H(+). It catalyses the reaction L-phenylalanyl-tRNA(Phe) + an N-terminal L-alpha-aminoacyl-[protein] = an N-terminal L-phenylalanyl-L-alpha-aminoacyl-[protein] + tRNA(Phe). In terms of biological role, functions in the N-end rule pathway of protein degradation where it conjugates Leu, Phe and, less efficiently, Met from aminoacyl-tRNAs to the N-termini of proteins containing an N-terminal arginine or lysine. The chain is Leucyl/phenylalanyl-tRNA--protein transferase from Shigella boydii serotype 18 (strain CDC 3083-94 / BS512).